The following is a 263-amino-acid chain: Endonuclease 8 (263 aa).

The active-site Schiff-base intermediate with DNA is the Pro2. The active-site Proton donor is the Glu3. Lys53 functions as the Proton donor; for beta-elimination activity in the catalytic mechanism. Gln70, Arg125, and Asn169 together coordinate DNA. Residues 229–263 (KVFHRDGEPCERCGGIIEKTTLSSRPFYWCPGCQH) form an FPG-type zinc finger. The active-site Proton donor; for delta-elimination activity is Arg253.

Belongs to the FPG family. It depends on Zn(2+) as a cofactor.

It carries out the reaction 2'-deoxyribonucleotide-(2'-deoxyribose 5'-phosphate)-2'-deoxyribonucleotide-DNA = a 3'-end 2'-deoxyribonucleotide-(2,3-dehydro-2,3-deoxyribose 5'-phosphate)-DNA + a 5'-end 5'-phospho-2'-deoxyribonucleoside-DNA + H(+). Functionally, involved in base excision repair of DNA damaged by oxidation or by mutagenic agents. Acts as a DNA glycosylase that recognizes and removes damaged bases. Has a preference for oxidized pyrimidines, such as thymine glycol, 5,6-dihydrouracil and 5,6-dihydrothymine. Has AP (apurinic/apyrimidinic) lyase activity and introduces nicks in the DNA strand. Cleaves the DNA backbone by beta-delta elimination to generate a single-strand break at the site of the removed base with both 3'- and 5'-phosphates. In Escherichia coli O6:K15:H31 (strain 536 / UPEC), this protein is Endonuclease 8.